A 384-amino-acid chain; its full sequence is MAKHLFTSESVSEGHPDKIADQISDAVLDAILEQDPKARVACETYVKTGMVLVGGEITTSAWVDIEEITRNTVREIGYVHSDMGFDANSCAVLSAIGKQSPDINQGVDRADPLEQGAGDQGLMFGYATNETDVLMPAPITYAHRLVQRQAEVRKNGTLPWLRPDAKSQVTFQYDDGKIVGIDAVVLSTQHSEEIDQKSLQEAVMEEIIKPILPAEWLTSATKFFINPTGRFVIGGPMGDCGLTGRKIIVDTYGGMARHGGGAFSGKDPSKVDRSAAYAARYVAKNIVAAGLADRCEIQVSYAIGVAEPTSIMVETFGTEKVPSEQLTLLVREFFDLRPYGLIQMLDLLHPIYKETAAYGHFGREHFPWEKTDKAQLLRDAAGLK.

ATP is bound at residue histidine 15. A Mg(2+)-binding site is contributed by aspartate 17. Glutamate 43 contacts K(+). L-methionine is bound by residues glutamate 56 and glutamine 99. The interval 99–109 (QSPDINQGVDR) is flexible loop. Residues 164-166 (DAK), 230-231 (RF), aspartate 239, 245-246 (RK), alanine 262, and lysine 266 each bind ATP. Aspartate 239 contacts L-methionine. Lysine 270 serves as a coordination point for L-methionine.

Belongs to the AdoMet synthase family. As to quaternary structure, homotetramer; dimer of dimers. The cofactor is Mg(2+). Requires K(+) as cofactor.

Its subcellular location is the cytoplasm. The enzyme catalyses L-methionine + ATP + H2O = S-adenosyl-L-methionine + phosphate + diphosphate. It participates in amino-acid biosynthesis; S-adenosyl-L-methionine biosynthesis; S-adenosyl-L-methionine from L-methionine: step 1/1. Functionally, catalyzes the formation of S-adenosylmethionine (AdoMet) from methionine and ATP. The overall synthetic reaction is composed of two sequential steps, AdoMet formation and the subsequent tripolyphosphate hydrolysis which occurs prior to release of AdoMet from the enzyme. This chain is S-adenosylmethionine synthase, found in Escherichia coli (strain K12 / DH10B).